The primary structure comprises 422 residues: MAKQLQARRLDGIDYNPWVEFVKLASEHDVVNLGQGFPDFPPPDFAVEAFQHAVSGDFMLNQYTKTFGYPPLTKILASFFGELLGQEIDPLRNVLVTVGGYGALFTAFQALVDEGDEVIIIEPFFDCYEPMTMMAGGRPVFVSLKPGPIQNGELGSSSNWQLDPMELAGKFTSRTKALVLNTPNNPLGKVFSREELELVASLCQQHDVVCITDEVYQWMVYDGHQHISIASLPGMWERTLTIGSAGKTFSATGWKVGWVLGPDHIMKHLRTVHQNSVFHCPTQSQAAVAESFEREQLLFRQPSSYFVQFPQAMQRCRDHMIRSLQSVGLKPIIPQGSYFLITDISDFKRKMPDLPGAVDEPYDRRFVKWMIKNKGLVAIPVSIFYSVPHQKHFDHYIRFCFVKDEATLQAMDEKLRKWKVEL.

Residues G36 and N185 each contribute to the substrate site. The residue at position 247 (K247) is an N6-(pyridoxal phosphate)lysine. A substrate-binding site is contributed by R398.

It belongs to the class-I pyridoxal-phosphate-dependent aminotransferase family. As to quaternary structure, homodimer. Pyridoxal 5'-phosphate is required as a cofactor.

The protein resides in the cytoplasm. Its subcellular location is the cytosol. The enzyme catalyses L-kynurenine + 2-oxoglutarate = kynurenate + L-glutamate + H2O. The catalysed reaction is 3-phenylpyruvate + L-glutamine = 2-oxoglutaramate + L-phenylalanine. It catalyses the reaction an S-substituted L-cysteine + H2O = a thiol + pyruvate + NH4(+). Its pathway is amino-acid degradation; L-kynurenine degradation; kynurenate from L-kynurenine: step 1/2. Inhibited by tryptophan, indole-3-pyruvic acid, 3-indolepropionic acid, DL-indole-3-lactic acid, indole-3-acetic acid (IAC), amino-oxyacetate (AOAA), aminooxy-phenylpropionic acid (AOPP) and Tris. Functionally, catalyzes the irreversible transamination of the L-tryptophan metabolite L-kynurenine to form kynurenic acid (KA), an intermediate in the tryptophan catabolic pathway which is also a broad spectrum antagonist of the three ionotropic excitatory amino acid receptors among others. Also metabolizes the cysteine conjugates of certain halogenated alkenes and alkanes to form reactive metabolites. Catalyzes the beta-elimination of S-conjugates and Se-conjugates of L-(seleno)cysteine, resulting in the cleavage of the C-S or C-Se bond. In Homo sapiens (Human), this protein is Kynurenine--oxoglutarate transaminase 1.